Consider the following 250-residue polypeptide: NH(3)-dependent NAD(+) synthetase (250 aa).

Residue 31-38 participates in ATP binding; the sequence is GISGGIDS. Asp37 provides a ligand contact to Mg(2+). Arg122 is a deamido-NAD(+) binding site. Residue Thr142 participates in ATP binding. Glu147 lines the Mg(2+) pocket. Deamido-NAD(+)-binding residues include Lys155 and Asp162. ATP is bound by residues Lys171 and Ser193. A deamido-NAD(+)-binding site is contributed by 239 to 240; that stretch reads HK.

It belongs to the NAD synthetase family. Homodimer.

It carries out the reaction deamido-NAD(+) + NH4(+) + ATP = AMP + diphosphate + NAD(+) + H(+). It participates in cofactor biosynthesis; NAD(+) biosynthesis; NAD(+) from deamido-NAD(+) (ammonia route): step 1/1. Functionally, catalyzes the ATP-dependent amidation of deamido-NAD to form NAD. Uses ammonia as a nitrogen source. The protein is NH(3)-dependent NAD(+) synthetase of Alkaliphilus oremlandii (strain OhILAs) (Clostridium oremlandii (strain OhILAs)).